Here is a 967-residue protein sequence, read N- to C-terminus: Aminopeptidase N (967 aa).

The Cytoplasmic segment spans residues 1 to 8 (MAKGFYIS). The helical; Signal-anchor for type II membrane protein transmembrane segment at 9 to 32 (KPVGILAILLGVAAVCTIIALSVV) threads the bilayer. Residues 33–66 (YSQEKNRSTESSTAASTAAPTGPTTTVATTLDQS) are cytosolic Ser/Thr-rich junction. The Extracellular segment spans residues 33–967 (YSQEKNRSTE…VVLRWFTENS (935 aa)). N-linked (GlcNAc...) asparagine glycosylation occurs at asparagine 38. The interval 41–61 (TESSTAASTAAPTGPTTTVAT) is disordered. The interval 67–967 (KPWNVYRLPK…VVLRWFTENS (901 aa)) is metalloprotease. N-linked (GlcNAc...) asparagine glycans are attached at residues asparagine 84 and asparagine 126. Tyrosine 175 is modified (sulfotyrosine). Asparagine 233 and asparagine 338 each carry an N-linked (GlcNAc...) asparagine glycan. 351-355 (GAMEN) serves as a coordination point for substrate. Histidine 387 lines the Zn(2+) pocket. Glutamate 388 acts as the Proton acceptor in catalysis. Zn(2+) is bound by residues histidine 391 and glutamate 410. Tyrosine 418 carries the post-translational modification Sulfotyrosine. N-linked (GlcNAc...) asparagine glycosylation is found at asparagine 626, asparagine 682, and asparagine 740. The interaction with FCoV and TGEV spike glycoprotein stretch occupies residues 670–840 (ASAQKVPVTL…GALACSNQVW (171 aa)). Cystine bridges form between cysteine 762/cysteine 769 and cysteine 799/cysteine 835.

Belongs to the peptidase M1 family. In terms of assembly, homodimer. Interacts with SLC6A19. (Microbial infection) Interacts with FCoV, CCoV, TGEV and HCoV-229E spike glycoprotein. It depends on Zn(2+) as a cofactor. Post-translationally, sulfated. In terms of processing, N- and O-glycosylated. May undergo proteolysis and give rise to a soluble form.

It localises to the cell membrane. The enzyme catalyses Release of an N-terminal amino acid, Xaa-|-Yaa- from a peptide, amide or arylamide. Xaa is preferably Ala, but may be most amino acids including Pro (slow action). When a terminal hydrophobic residue is followed by a prolyl residue, the two may be released as an intact Xaa-Pro dipeptide.. Broad specificity aminopeptidase which plays a role in the final digestion of peptides generated from hydrolysis of proteins by gastric and pancreatic proteases. Also involved in the processing of various peptides including peptide hormones, such as angiotensin III and IV, neuropeptides, and chemokines. May also be involved the cleavage of peptides bound to major histocompatibility complex class II molecules of antigen presenting cells. May have a role in angiogenesis and promote cholesterol crystallization. May have a role in amino acid transport by acting as binding partner of amino acid transporter SLC6A19 and regulating its activity. Its function is as follows. (Microbial infection) In case of feline coronavirus (FCoV) infection, serves as a receptor for FCoV spike glycoprotein. It is as well a receptor for other serogroup I coronaviruses, like canine coronavirus (CCoV), porcine transmissible gastroenteritis virus (TGEV), and human coronavirus 229E (HCoV-229E). Also serves as a receptor for infectious bronchitis virus (IBV, Arkansas 99 serotype) in serogroup III. In Felis catus (Cat), this protein is Aminopeptidase N (ANPEP).